The following is a 1114-amino-acid chain: MADAIEIEEMMLEDRDIAVVLEVPTRRRRSRERDYRDRRDDSYDDRARRRREDSTDSWSRSRGDENRGQTPRSDSGAKVHDAPKASAPAAQTEEQKKAERLAKLEAWKKKMAEDKERKEKELAAGGTRKLLDDIDQKANGSSSQPSPNTPTTPSTSAISGDLAPTNYAGKFDPKAIAKKAVASSSSAHALGRDLPLKELSKTSATLTSTVKGLQADKKPTAFNSTSKVSALPKTRGNLSVFGLGAKVTDNEKTYQKRALDFDEDEGSRKKLEKLPTLPMANSKEDDAALANGIEGQDDDDDAELEAAGTEEEAAAAARAAAEKREERLQEAESQPHTNGDVHMEDAPQADSTAMDEDEEIDPLDAFMEEMGDPFSLPKSNTTFVKNNTKSQPQEPEALFGDDDVDLKALDADPDEILAIANKARKKKDIPTINYANLNLPPFRKNFYTEPAELVDMTEAEINDLRLELDGIKVAGKDVPKPVQKWSQCGLDVKSLDVIKKLGYDKPTSIQMQAIPAIMSGRDVIGVAKTGSGKTIAFLLPMFRHIRDQRPLKNSDGPIGLIMTPTRELATQIHKECKPFLKAMGLRAVCAYGGAIIKDQIADLKRGAEIIVCTPGRMIELLAANSGRVTNLQRVTYVVLDEADRMFDMGFEPQVMKVFNNIRPNRQTILFSATMPRIMDALAKKTLQSPVEIVVGGRSVVAPEITQIVEVREEKEKFHRLLELLGELYNADEDARTLIFVDRQEKADDLLKDLMRKGYPCMSIHGGKDQVDRDSTIDDFKAGVVPIMIATSVAARGLDVKQLKLVVNFDAPNHLEDYVHRAGRTGRAGNTGTAVTFITEEQEQYSVGIAKALEQSGQEVPERLNEMRKSYKDKVKSGAKKESSGFGGKGLERFDAEREATKARERKIHKLNGDDDEEEKEEKDDDVLLKAASVVQPASASTAPPKLLGVPKGIDLDGDIKVHRTETAASSSGSKNPLDKVTSAIDAINARLNKTGQLRSGVPIDNKGPDAGAFHATLEINDFPQKARWAVTNRTNVAKILEATGTSITTKGSFYPAGKEVQAGGDPKLYILVEGDTEVVVTNAMRELMRLLKEGTMAAADAEGRAPASGRYTVT.

Disordered stretches follow at residues 20 to 168 (VLEV…TNYA), 181 to 200 (VASS…KELS), and 257 to 356 (RALD…AMDE). Composition is skewed to basic and acidic residues over residues 31-67 (RERD…DENR) and 93-122 (EEQK…EKEL). A compositionally biased stretch (low complexity) spans 141–156 (SSSQPSPNTPTTPSTS). 2 stretches are compositionally biased toward basic and acidic residues: residues 190 to 200 (LGRDLPLKELS) and 257 to 273 (RALD…KLEK). Residues 295–313 (GQDDDDDAELEAAGTEEEA) are compositionally biased toward acidic residues. Over residues 320–330 (AAEKREERLQE) the composition is skewed to basic and acidic residues. A Q motif motif is present at residues 483 to 511 (QKWSQCGLDVKSLDVIKKLGYDKPTSIQM). Residues 514–692 (IPAIMSGRDV…KKTLQSPVEI (179 aa)) enclose the Helicase ATP-binding domain. 527–534 (AKTGSGKT) is a binding site for ATP. The DEAD box motif lies at 640 to 643 (DEAD). One can recognise a Helicase C-terminal domain in the interval 703–867 (EITQIVEVRE…EVPERLNEMR (165 aa)). Basic and acidic residues-rich tracts occupy residues 869 to 882 (SYKD…KKES) and 889 to 902 (GLER…ATKA). The disordered stretch occupies residues 869 to 924 (SYKDKVKSGAKKESSGFGGKGLERFDAEREATKARERKIHKLNGDDDEEEKEEKDD). The segment covering 913–924 (DDDEEEKEEKDD) has biased composition (acidic residues).

It belongs to the DEAD box helicase family. DDX46/PRP5 subfamily.

The protein resides in the nucleus. The enzyme catalyses ATP + H2O = ADP + phosphate + H(+). Functionally, ATP-dependent RNA helicase involved spliceosome assembly and in nuclear splicing. Catalyzes an ATP-dependent conformational change of U2 snRNP. Bridges U1 and U2 snRNPs and enables stable U2 snRNP association with intron RNA. This chain is Pre-mRNA-processing ATP-dependent RNA helicase prp5 (prp5), found in Sclerotinia sclerotiorum (strain ATCC 18683 / 1980 / Ss-1) (White mold).